The chain runs to 406 residues: Protein IWS1 homolog 2 (406 aa).

Disordered regions lie at residues 1–28 (MQEL…TGRR) and 41–89 (DEVE…SEEV). Residues 10–24 (EWVKELEGENEESKF) are compositionally biased toward basic and acidic residues. A compositionally biased stretch (acidic residues) spans 41 to 56 (DEVEEDLDDFTEPADD). Basic and acidic residues predominate over residues 69-78 (KKDESGLEKT). A TFIIS N-terminal domain is found at 201 to 284 (NLLKNWLEPL…NKWGRIIYNK (84 aa)).

This sequence belongs to the IWS1 family.

The protein resides in the nucleus. Its function is as follows. Transcription factor involved in RNA polymerase II (RNAPII) transcription regulation. Involved in transcription elongation. May function at post-recruitment and elongation steps of transcription. This chain is Protein IWS1 homolog 2, found in Arabidopsis thaliana (Mouse-ear cress).